Reading from the N-terminus, the 24-residue chain is Brevinin-1PTb (24 aa).

A disulfide bridge links cysteine 18 with cysteine 24.

Expressed by the skin glands.

The protein resides in the secreted. In terms of biological role, has antibacterial activity against the Gram-positive bacterium S.aureus ATCC 25923 and the Gram-negative bacterium E.coli ATCC 25726. This chain is Brevinin-1PTb, found in Pulchrana picturata (Malaysian fire frog).